The sequence spans 404 residues: Cysteine desulfurase IscS (404 aa).

Pyridoxal 5'-phosphate is bound by residues 75 to 76 (AT), asparagine 155, glutamine 183, and 203 to 205 (SAH). Lysine 206 is modified (N6-(pyridoxal phosphate)lysine). Threonine 243 contributes to the pyridoxal 5'-phosphate binding site. Cysteine 328 (cysteine persulfide intermediate) is an active-site residue. Residue cysteine 328 participates in [2Fe-2S] cluster binding.

Belongs to the class-V pyridoxal-phosphate-dependent aminotransferase family. NifS/IscS subfamily. Homodimer. Forms a heterotetramer with IscU, interacts with other sulfur acceptors. It depends on pyridoxal 5'-phosphate as a cofactor.

It localises to the cytoplasm. The enzyme catalyses (sulfur carrier)-H + L-cysteine = (sulfur carrier)-SH + L-alanine. The protein operates within cofactor biosynthesis; iron-sulfur cluster biosynthesis. Functionally, master enzyme that delivers sulfur to a number of partners involved in Fe-S cluster assembly, tRNA modification or cofactor biosynthesis. Catalyzes the removal of elemental sulfur atoms from cysteine to produce alanine. Functions as a sulfur delivery protein for Fe-S cluster synthesis onto IscU, an Fe-S scaffold assembly protein, as well as other S acceptor proteins. In Buchnera aphidicola subsp. Baizongia pistaciae (strain Bp), this protein is Cysteine desulfurase IscS.